Here is a 119-residue protein sequence, read N- to C-terminus: Large ribosomal subunit protein uL22 (119 aa).

The protein belongs to the universal ribosomal protein uL22 family. As to quaternary structure, part of the 50S ribosomal subunit.

Functionally, this protein binds specifically to 23S rRNA; its binding is stimulated by other ribosomal proteins, e.g. L4, L17, and L20. It is important during the early stages of 50S assembly. It makes multiple contacts with different domains of the 23S rRNA in the assembled 50S subunit and ribosome. In terms of biological role, the globular domain of the protein is located near the polypeptide exit tunnel on the outside of the subunit, while an extended beta-hairpin is found that lines the wall of the exit tunnel in the center of the 70S ribosome. This is Large ribosomal subunit protein uL22 from Rickettsia felis (strain ATCC VR-1525 / URRWXCal2) (Rickettsia azadi).